A 220-amino-acid polypeptide reads, in one-letter code: ATP phosphoribosyltransferase (220 aa).

The protein belongs to the ATP phosphoribosyltransferase family. Short subfamily. In terms of assembly, heteromultimer composed of HisG and HisZ subunits.

It localises to the cytoplasm. It catalyses the reaction 1-(5-phospho-beta-D-ribosyl)-ATP + diphosphate = 5-phospho-alpha-D-ribose 1-diphosphate + ATP. The protein operates within amino-acid biosynthesis; L-histidine biosynthesis; L-histidine from 5-phospho-alpha-D-ribose 1-diphosphate: step 1/9. Its function is as follows. Catalyzes the condensation of ATP and 5-phosphoribose 1-diphosphate to form N'-(5'-phosphoribosyl)-ATP (PR-ATP). Has a crucial role in the pathway because the rate of histidine biosynthesis seems to be controlled primarily by regulation of HisG enzymatic activity. The chain is ATP phosphoribosyltransferase from Anaeromyxobacter sp. (strain Fw109-5).